The sequence spans 209 residues: MGKKKRSASSSRWLNEHFSDQFVQKAHKQKLRSRAYFKIDEIQQTDKLFKQGMTVVDLGAAPGGWSQYVVSQIGGKGRVIACDILEMDPIVGVDFLQGDFRDENVLNALLERVGEAKVDVVMSDMAPNFSGMPSVDIPRAMYLVELALDMCKQVLASKGSFVVKVFQGEGFDEYLREIRSLFNVVKVRKPEASRGRSREVYIVATGYKG.

Residues glycine 63, tryptophan 65, aspartate 83, aspartate 99, and aspartate 124 each contribute to the S-adenosyl-L-methionine site. The active-site Proton acceptor is lysine 164. The region spanning 191 to 209 (EASRGRSREVYIVATGYKG) is the TRAM domain.

This sequence belongs to the class I-like SAM-binding methyltransferase superfamily. RNA methyltransferase RlmE family.

It localises to the cytoplasm. It carries out the reaction uridine(2552) in 23S rRNA + S-adenosyl-L-methionine = 2'-O-methyluridine(2552) in 23S rRNA + S-adenosyl-L-homocysteine + H(+). Its function is as follows. Specifically methylates the uridine in position 2552 of 23S rRNA at the 2'-O position of the ribose in the fully assembled 50S ribosomal subunit. This chain is Ribosomal RNA large subunit methyltransferase E, found in Haemophilus influenzae (strain 86-028NP).